Consider the following 473-residue polypeptide: Adenosylhomocysteinase (473 aa).

Substrate is bound by residues Thr-64, Asp-139, and Glu-199. An NAD(+)-binding site is contributed by 200–202 (TTT). The substrate site is built by Lys-229 and Asp-233. Residues Asn-234, 263-268 (GYGDVG), Glu-286, Asn-321, 342-344 (IGH), and Asn-387 contribute to the NAD(+) site.

This sequence belongs to the adenosylhomocysteinase family. Requires NAD(+) as cofactor.

Its subcellular location is the cytoplasm. It catalyses the reaction S-adenosyl-L-homocysteine + H2O = L-homocysteine + adenosine. Its pathway is amino-acid biosynthesis; L-homocysteine biosynthesis; L-homocysteine from S-adenosyl-L-homocysteine: step 1/1. Its function is as follows. May play a key role in the regulation of the intracellular concentration of adenosylhomocysteine. The chain is Adenosylhomocysteinase from Burkholderia thailandensis (strain ATCC 700388 / DSM 13276 / CCUG 48851 / CIP 106301 / E264).